Reading from the N-terminus, the 229-residue chain is Adenylate kinase 1 (229 aa).

G42 to T47 provides a ligand contact to ATP. S62 carries the post-translational modification Phosphoserine. Residues S63, R68, G118–R121, and Q125 contribute to the AMP site. ATP is bound at residue R156. AMP-binding residues include R164 and R175.

The protein belongs to the adenylate kinase family. AK1 subfamily. High expression levels in the thorax, suggesting a possible function in the gastrointestinal or reproductive systems.

It localises to the cytoplasm. The enzyme catalyses AMP + ATP = 2 ADP. Functionally, catalyzes the reversible transfer of the terminal phosphate group between ATP and AMP. Plays an important role in cellular energy homeostasis and in adenine nucleotide metabolism. This chain is Adenylate kinase 1, found in Drosophila melanogaster (Fruit fly).